The following is a 294-amino-acid chain: 3-methyl-2-oxobutanoate hydroxymethyltransferase 1 (294 aa).

Asp55 lines the Mg(2+) pocket. 3-methyl-2-oxobutanoate-binding positions include Asp55–Ser56 and Lys123. Residue Glu192 is the Proton acceptor of the active site.

It belongs to the PanB family. Homodecamer; pentamer of dimers. Mg(2+) serves as cofactor.

The protein resides in the cytoplasm. The catalysed reaction is 3-methyl-2-oxobutanoate + (6R)-5,10-methylene-5,6,7,8-tetrahydrofolate + H2O = 2-dehydropantoate + (6S)-5,6,7,8-tetrahydrofolate. Its pathway is cofactor biosynthesis; (R)-pantothenate biosynthesis; (R)-pantoate from 3-methyl-2-oxobutanoate: step 1/2. Its function is as follows. Catalyzes the reversible reaction in which hydroxymethyl group from 5,10-methylenetetrahydrofolate is transferred onto alpha-ketoisovalerate to form ketopantoate. The protein is 3-methyl-2-oxobutanoate hydroxymethyltransferase 1 of Methylibium petroleiphilum (strain ATCC BAA-1232 / LMG 22953 / PM1).